Here is a 235-residue protein sequence, read N- to C-terminus: MKAAIIGAMEEEVAILRSRMEGCEETVIAGCEFSKGRLDGVEAVLLKSGIGKVNAAMGTTLLLDHFRPDFVINTGSAGGFLPSLRVGDLVISEEVVHHDVDVTAFGYAYGQVPGLPARYRADEALVEAAKQAAARLDGLQAVTGLIATGDSFMNDPKRVEFVRGQFPELCAVEMEAAAIAQVCVQFGTPFVIIRALSDIAGEESGVSFEQFLETAAKHSAELVLSMLSVMKQKRY.

The Proton acceptor role is filled by Glu-12. Residues Gly-78, Met-153, and 174-175 each bind substrate; that span reads ME. Residue Asp-198 is the Proton donor of the active site.

It belongs to the PNP/UDP phosphorylase family. MtnN subfamily.

The enzyme catalyses S-adenosyl-L-homocysteine + H2O = S-(5-deoxy-D-ribos-5-yl)-L-homocysteine + adenine. It carries out the reaction S-methyl-5'-thioadenosine + H2O = 5-(methylsulfanyl)-D-ribose + adenine. The catalysed reaction is 5'-deoxyadenosine + H2O = 5-deoxy-D-ribose + adenine. The protein operates within amino-acid biosynthesis; L-methionine biosynthesis via salvage pathway; S-methyl-5-thio-alpha-D-ribose 1-phosphate from S-methyl-5'-thioadenosine (hydrolase route): step 1/2. Its function is as follows. Catalyzes the irreversible cleavage of the glycosidic bond in both 5'-methylthioadenosine (MTA) and S-adenosylhomocysteine (SAH/AdoHcy) to adenine and the corresponding thioribose, 5'-methylthioribose and S-ribosylhomocysteine, respectively. Also cleaves 5'-deoxyadenosine, a toxic by-product of radical S-adenosylmethionine (SAM) enzymes, into 5-deoxyribose and adenine. This chain is 5'-methylthioadenosine/S-adenosylhomocysteine nucleosidase, found in Geobacillus kaustophilus (strain HTA426).